A 61-amino-acid polypeptide reads, in one-letter code: Small ribosomal subunit protein uS14 (61 aa).

Zn(2+)-binding residues include cysteine 24, cysteine 27, cysteine 40, and cysteine 43.

The protein belongs to the universal ribosomal protein uS14 family. Zinc-binding uS14 subfamily. Part of the 30S ribosomal subunit. Contacts proteins S3 and S10. Zn(2+) is required as a cofactor.

In terms of biological role, binds 16S rRNA, required for the assembly of 30S particles and may also be responsible for determining the conformation of the 16S rRNA at the A site. This Desulfitobacterium hafniense (strain Y51) protein is Small ribosomal subunit protein uS14.